A 281-amino-acid polypeptide reads, in one-letter code: uncharacterized protein (281 aa).

A disordered region spans residues 1–30; it reads MVQIQFHQGEPLGHKKEKPPPVSPPSPPPI. The segment covering 20-30 has biased composition (pro residues); the sequence is PPVSPPSPPPI. Helical transmembrane passes span 58–78, 88–107, 117–137, 145–165, 171–191, 196–216, and 248–268; these read TVVF…LIPW, TLPF…AYWL, MLVM…GLCF, AYVL…LMAW, LAIL…IAVQ, YQRI…IVLI, and VIMF…PNYA.

This sequence belongs to the cytomegalovirus US12 family.

Its subcellular location is the host membrane. This is an uncharacterized protein from Homo sapiens (Human).